The primary structure comprises 383 residues: MRHVLNKEQLLMVKQAAIAWAAAEPLSVENVEVAPPKAHEVRIKILHTGVCHTDAYTLSGKDPEGAFPVILGHEGAGIVESVGEGVTNVKVGDYVIALYTPECGECKFCRSGKTNLCGKIRATQGRGVMPDGTTRFKARGKDLLHFMGCSTFSEYTVVADISVVAVTPSCPTDRSCLLGCGITTGYGAATVTANITEGSNVAVFGAGCVGLSIVQGAVKKKAGKIIVVDINDGKEAWAYKFGATHFLNPARLRKTVQDELIDMTDGGCDYTFDCTGNVSVMRAALEACHKGWGESIVIGVAAAGQEITTRPFQLVTGRVWRGCAFGGVKGRSQLPGLVEDYLNGDLKIDEFITHRETLANINTAFEQMKQGDCIRCVVDMVVS.

A Zn(2+)-binding site is contributed by cysteine 51. NAD(+) is bound at residue histidine 52. Residues histidine 73, glutamate 74, cysteine 103, cysteine 106, cysteine 109, cysteine 117, and cysteine 180 each coordinate Zn(2+). Residues 205 to 210, aspartate 229, and 298 to 300 contribute to the NAD(+) site; these read GAGCVG and IGV.

The protein belongs to the zinc-containing alcohol dehydrogenase family. Class-III subfamily. Zn(2+) is required as a cofactor.

The catalysed reaction is a primary alcohol + NAD(+) = an aldehyde + NADH + H(+). The enzyme catalyses a secondary alcohol + NAD(+) = a ketone + NADH + H(+). It carries out the reaction S-(hydroxymethyl)glutathione + NADP(+) = S-formylglutathione + NADPH + H(+). It catalyses the reaction S-(hydroxymethyl)glutathione + NAD(+) = S-formylglutathione + NADH + H(+). The catalysed reaction is S-nitrosoglutathione + NADH + H(+) = S-(hydroxysulfenamide)glutathione + NAD(+). Oxidizes long-chain alcohols and, in the presence of glutathione, is able to oxidize formaldehyde. Also acts as a S-nitroso-glutathione reductase by catalyzing the NADH-dependent reduction of S-nitrosoglutathione, thereby regulating protein S-nitrosylation. This is S-(hydroxymethyl)glutathione dehydrogenase (FDH1) from Aspergillus oryzae (strain ATCC 42149 / RIB 40) (Yellow koji mold).